Here is a 338-residue protein sequence, read N- to C-terminus: Flap endonuclease 1 (338 aa).

The tract at residues 1–98 (MGTDIGDLLQ…ETLNRRKEVR (98 aa)) is N-domain. Aspartate 27, aspartate 80, glutamate 152, glutamate 154, aspartate 173, aspartate 175, and aspartate 236 together coordinate Mg(2+). An I-domain region spans residues 116 to 257 (AAYKYAQASS…TALKLIKKHG (142 aa)). Residues 330 to 338 (RQQTLDQWF) are interaction with PCNA.

This sequence belongs to the XPG/RAD2 endonuclease family. FEN1 subfamily. In terms of assembly, interacts with PCNA. PCNA stimulates the nuclease activity without altering cleavage specificity. It depends on Mg(2+) as a cofactor.

In terms of biological role, structure-specific nuclease with 5'-flap endonuclease and 5'-3' exonuclease activities involved in DNA replication and repair. During DNA replication, cleaves the 5'-overhanging flap structure that is generated by displacement synthesis when DNA polymerase encounters the 5'-end of a downstream Okazaki fragment. Binds the unpaired 3'-DNA end and kinks the DNA to facilitate 5' cleavage specificity. Cleaves one nucleotide into the double-stranded DNA from the junction in flap DNA, leaving a nick for ligation. Also involved in the base excision repair (BER) pathway. Acts as a genome stabilization factor that prevents flaps from equilibrating into structures that lead to duplications and deletions. Also possesses 5'-3' exonuclease activity on nicked or gapped double-stranded DNA. The sequence is that of Flap endonuclease 1 from Methanosarcina barkeri (strain Fusaro / DSM 804).